Reading from the N-terminus, the 379-residue chain is ATP phosphoribosyltransferase regulatory subunit (379 aa).

It belongs to the class-II aminoacyl-tRNA synthetase family. HisZ subfamily. In terms of assembly, heteromultimer composed of HisG and HisZ subunits.

The protein localises to the cytoplasm. It participates in amino-acid biosynthesis; L-histidine biosynthesis; L-histidine from 5-phospho-alpha-D-ribose 1-diphosphate: step 1/9. Functionally, required for the first step of histidine biosynthesis. May allow the feedback regulation of ATP phosphoribosyltransferase activity by histidine. The polypeptide is ATP phosphoribosyltransferase regulatory subunit (Paramagnetospirillum magneticum (strain ATCC 700264 / AMB-1) (Magnetospirillum magneticum)).